The sequence spans 307 residues: Putative S-adenosyl-L-methionine-dependent methyltransferase MUL_4430 (307 aa).

S-adenosyl-L-methionine-binding positions include Asp-128 and 157-158; that span reads DL.

It belongs to the UPF0677 family.

Its function is as follows. Exhibits S-adenosyl-L-methionine-dependent methyltransferase activity. In Mycobacterium ulcerans (strain Agy99), this protein is Putative S-adenosyl-L-methionine-dependent methyltransferase MUL_4430.